Here is a 217-residue protein sequence, read N- to C-terminus: Nucleoside diphosphate-linked moiety X motif 6 (217 aa).

One can recognise a Nudix hydrolase domain in the interval 42–177 (THQVGVAGAV…VAKLLLYGYN (136 aa)). A Nudix box motif is present at residues 77 to 98 (GLSDQGEDIGATAVREVLEETG).

It belongs to the Nudix hydrolase family. In terms of tissue distribution, detected in liver (at protein level).

It localises to the cytoplasm. Its subcellular location is the nucleus. The protein resides in the mitochondrion. In terms of biological role, may contribute to the regulation of cell proliferation. This is Nucleoside diphosphate-linked moiety X motif 6 (nudt6) from Xenopus laevis (African clawed frog).